A 98-amino-acid chain; its full sequence is Small ribosomal subunit protein bS6 (98 aa).

This sequence belongs to the bacterial ribosomal protein bS6 family.

Its function is as follows. Binds together with bS18 to 16S ribosomal RNA. The chain is Small ribosomal subunit protein bS6 from Lactobacillus helveticus (strain DPC 4571).